Here is a 567-residue protein sequence, read N- to C-terminus: Mitochondrial distribution and morphology protein 34 (567 aa).

One can recognise an SMP-LTD domain in the interval 1–224 (MSFKFNEESF…LPSALFNMSR (224 aa)). The span at 392–416 (NKATETSSNLNADSEITPVSSSHNA) shows a compositional bias: polar residues. The interval 392–453 (NKATETSSNL…NRSSSFTSSI (62 aa)) is disordered. Residues 417 to 452 (TSSVNTITSLTTSSLGSTAGSSNSKNTNRSSSFTSS) are compositionally biased toward low complexity.

It belongs to the MDM34 family. As to quaternary structure, component of the ER-mitochondria encounter structure (ERMES) or MDM complex, composed of MMM1, MDM10, MDM12 and MDM34.

It is found in the mitochondrion outer membrane. Functionally, component of the ERMES/MDM complex, which serves as a molecular tether to connect the endoplasmic reticulum (ER) and mitochondria. Components of this complex are involved in the control of mitochondrial shape and protein biogenesis, and function in nonvesicular lipid trafficking between the ER and mitochondria. MDM34 is required for the interaction of the ER-resident membrane protein MMM1 and the outer mitochondrial membrane-resident beta-barrel protein MDM10. The sequence is that of Mitochondrial distribution and morphology protein 34 from Vanderwaltozyma polyspora (strain ATCC 22028 / DSM 70294 / BCRC 21397 / CBS 2163 / NBRC 10782 / NRRL Y-8283 / UCD 57-17) (Kluyveromyces polysporus).